Reading from the N-terminus, the 529-residue chain is ATP synthase subunit alpha (529 aa).

173-180 is a binding site for ATP; that stretch reads GDRQTGKT.

The protein belongs to the ATPase alpha/beta chains family. As to quaternary structure, F-type ATPases have 2 components, CF(1) - the catalytic core - and CF(0) - the membrane proton channel. CF(1) has five subunits: alpha(3), beta(3), gamma(1), delta(1), epsilon(1). CF(0) has three main subunits: a(1), b(2) and c(9-12). The alpha and beta chains form an alternating ring which encloses part of the gamma chain. CF(1) is attached to CF(0) by a central stalk formed by the gamma and epsilon chains, while a peripheral stalk is formed by the delta and b chains.

It localises to the cell membrane. It catalyses the reaction ATP + H2O + 4 H(+)(in) = ADP + phosphate + 5 H(+)(out). In terms of biological role, produces ATP from ADP in the presence of a proton gradient across the membrane. The alpha chain is a regulatory subunit. This is ATP synthase subunit alpha from Streptomyces lividans.